We begin with the raw amino-acid sequence, 147 residues long: Cytochrome c-type biogenesis protein CcmE (147 aa).

The Cytoplasmic segment spans residues 1-7; sequence MTRKQKR. A helical; Signal-anchor for type II membrane protein transmembrane segment spans residues 8–28; it reads LSVIVGGLAFLGAATGLTFYA. Residues 29–147 are Periplasmic-facing; sequence LGQKASYFYM…KGVWQESKSE (119 aa). Positions 122 and 126 each coordinate heme.

This sequence belongs to the CcmE/CycJ family.

The protein localises to the cell inner membrane. Functionally, heme chaperone required for the biogenesis of c-type cytochromes. Transiently binds heme delivered by CcmC and transfers the heme to apo-cytochromes in a process facilitated by CcmF and CcmH. The sequence is that of Cytochrome c-type biogenesis protein CcmE from Mesorhizobium japonicum (strain LMG 29417 / CECT 9101 / MAFF 303099) (Mesorhizobium loti (strain MAFF 303099)).